The primary structure comprises 193 residues: Peptidyl-tRNA hydrolase (193 aa).

Tyr-16 serves as a coordination point for tRNA. His-21 serves as the catalytic Proton acceptor. Residues Phe-66, Asn-68, and Asn-114 each coordinate tRNA.

This sequence belongs to the PTH family. Monomer.

Its subcellular location is the cytoplasm. It carries out the reaction an N-acyl-L-alpha-aminoacyl-tRNA + H2O = an N-acyl-L-amino acid + a tRNA + H(+). Functionally, hydrolyzes ribosome-free peptidyl-tRNAs (with 1 or more amino acids incorporated), which drop off the ribosome during protein synthesis, or as a result of ribosome stalling. Catalyzes the release of premature peptidyl moieties from peptidyl-tRNA molecules trapped in stalled 50S ribosomal subunits, and thus maintains levels of free tRNAs and 50S ribosomes. The chain is Peptidyl-tRNA hydrolase from Pelobacter propionicus (strain DSM 2379 / NBRC 103807 / OttBd1).